The chain runs to 264 residues: Segregation and condensation protein A (264 aa).

Belongs to the ScpA family. As to quaternary structure, component of a cohesin-like complex composed of ScpA, ScpB and the Smc homodimer, in which ScpA and ScpB bind to the head domain of Smc. The presence of the three proteins is required for the association of the complex with DNA.

The protein localises to the cytoplasm. In terms of biological role, participates in chromosomal partition during cell division. May act via the formation of a condensin-like complex containing Smc and ScpB that pull DNA away from mid-cell into both cell halves. The chain is Segregation and condensation protein A from Enterococcus faecalis (strain ATCC 700802 / V583).